Reading from the N-terminus, the 566-residue chain is Arginine--tRNA ligase (566 aa).

Residues 121-131 (ANPNGPFHIGH) carry the 'HIGH' region motif.

The protein belongs to the class-I aminoacyl-tRNA synthetase family.

It is found in the cytoplasm. The catalysed reaction is tRNA(Arg) + L-arginine + ATP = L-arginyl-tRNA(Arg) + AMP + diphosphate. The sequence is that of Arginine--tRNA ligase from Methanococcus maripaludis (strain C7 / ATCC BAA-1331).